The primary structure comprises 240 residues: Phosphatidylserine decarboxylase proenzyme (240 aa).

Catalysis depends on S209, which acts as the Schiff-base intermediate with substrate; via pyruvic acid. At S209 the chain carries Pyruvic acid (Ser); by autocatalysis.

Belongs to the phosphatidylserine decarboxylase family. PSD-A subfamily. Heterodimer of a large membrane-associated beta subunit and a small pyruvoyl-containing alpha subunit. It depends on pyruvate as a cofactor. Is synthesized initially as an inactive proenzyme. Formation of the active enzyme involves a self-maturation process in which the active site pyruvoyl group is generated from an internal serine residue via an autocatalytic post-translational modification. Two non-identical subunits are generated from the proenzyme in this reaction, and the pyruvate is formed at the N-terminus of the alpha chain, which is derived from the carboxyl end of the proenzyme. The post-translation cleavage follows an unusual pathway, termed non-hydrolytic serinolysis, in which the side chain hydroxyl group of the serine supplies its oxygen atom to form the C-terminus of the beta chain, while the remainder of the serine residue undergoes an oxidative deamination to produce ammonia and the pyruvoyl prosthetic group on the alpha chain.

The protein resides in the cell membrane. It carries out the reaction a 1,2-diacyl-sn-glycero-3-phospho-L-serine + H(+) = a 1,2-diacyl-sn-glycero-3-phosphoethanolamine + CO2. Its pathway is phospholipid metabolism; phosphatidylethanolamine biosynthesis; phosphatidylethanolamine from CDP-diacylglycerol: step 2/2. Catalyzes the formation of phosphatidylethanolamine (PtdEtn) from phosphatidylserine (PtdSer). The chain is Phosphatidylserine decarboxylase proenzyme from Mycobacterium ulcerans (strain Agy99).